The sequence spans 572 residues: Butyrate--CoA ligase AAE11, peroxisomal (572 aa).

Residues 570–572 (SRL) carry the Microbody targeting signal motif.

Belongs to the ATP-dependent AMP-binding enzyme family. In terms of tissue distribution, expressed in flowers.

The protein resides in the peroxisome. The catalysed reaction is a medium-chain fatty acid + ATP + CoA = a medium-chain fatty acyl-CoA + AMP + diphosphate. Functionally, butyrate--CoA ligase that is active in vitro with medium-chain fatty acids, with a preference for hexanoate and octanoate. In Arabidopsis thaliana (Mouse-ear cress), this protein is Butyrate--CoA ligase AAE11, peroxisomal (AAE11).